Reading from the N-terminus, the 228-residue chain is Transcription repressor OFP8 (228 aa).

Composition is skewed to low complexity over residues 1 to 14 (MSGR…FSLR), 54 to 79 (ASST…TDSS), and 92 to 101 (EEPAAAQQEQ). Disordered stretches follow at residues 1–21 (MSGR…VVDI) and 36–143 (SSSS…QLQE). Basic residues predominate over residues 107–120 (RRRRRQQRRRRRRA). The OVATE domain occupies 157-216 (VAVESAEPYEDFRESMVQMVVEKEIYAWDDLNDLLHQFLSLNSPRHHPLILHAFADLWTR).

As to quaternary structure, interacts with GSK2. Phosphorylated on serine and threonine residues by GSK2. Dephosphorylated during response to brassinosteroid. In terms of tissue distribution, expressed in roots, stems, stem nodes, young leaves, leaf sheaths, lamina joints, young spikelets, inflorescences, stamens and ovaries, embryos and seeds.

The protein resides in the nucleus. The protein localises to the cytoplasm. In terms of biological role, probable transcriptional repressor that regulates multiple aspects of plant growth and development, partly through brassinosteroid (BR) signaling pathway. Acts downstream of the kinase GSK2, a negative regulator of BR signaling. This Oryza sativa subsp. japonica (Rice) protein is Transcription repressor OFP8.